The primary structure comprises 119 residues: UPF0145 protein Ta0182 (119 aa).

It belongs to the UPF0145 family.

This is UPF0145 protein Ta0182 from Thermoplasma acidophilum (strain ATCC 25905 / DSM 1728 / JCM 9062 / NBRC 15155 / AMRC-C165).